Here is a 125-residue protein sequence, read N- to C-terminus: MARVKRGVTSHAKHKKVLKAAKGYYGRRKNTIRIAKQAVEKGLQYAYRDRKNRKRNFRSLWIQRLNAAAREHGLTYSRLIDGLAKAGIVVDRKALSELAIHEPAAFAAVVEQARAALPAETAQAA.

It belongs to the bacterial ribosomal protein bL20 family.

In terms of biological role, binds directly to 23S ribosomal RNA and is necessary for the in vitro assembly process of the 50S ribosomal subunit. It is not involved in the protein synthesizing functions of that subunit. In Methylobacterium sp. (strain 4-46), this protein is Large ribosomal subunit protein bL20.